The sequence spans 123 residues: Small ribosomal subunit protein uS12 (123 aa).

Over residues 10 to 20 the composition is skewed to basic residues; sequence KGRKKVKKKKT. The interval 10-32 is disordered; the sequence is KGRKKVKKKKTAPALQGSPQKRG. Asp89 is modified (3-methylthioaspartic acid).

The protein belongs to the universal ribosomal protein uS12 family. Part of the 30S ribosomal subunit. Contacts proteins S8 and S17. May interact with IF1 in the 30S initiation complex.

Functionally, with S4 and S5 plays an important role in translational accuracy. Its function is as follows. Interacts with and stabilizes bases of the 16S rRNA that are involved in tRNA selection in the A site and with the mRNA backbone. Located at the interface of the 30S and 50S subunits, it traverses the body of the 30S subunit contacting proteins on the other side and probably holding the rRNA structure together. The combined cluster of proteins S8, S12 and S17 appears to hold together the shoulder and platform of the 30S subunit. The sequence is that of Small ribosomal subunit protein uS12 from Halothermothrix orenii (strain H 168 / OCM 544 / DSM 9562).